The following is a 553-amino-acid chain: Glucose-6-phosphate isomerase (553 aa).

The Proton donor role is filled by glutamate 357. Residues histidine 388 and lysine 514 contribute to the active site. The segment at 527–553 (ADSPAAQSDSSTDALVRRYRTERGRTA) is disordered. The segment covering 541–553 (LVRRYRTERGRTA) has biased composition (basic and acidic residues).

It belongs to the GPI family.

The protein localises to the cytoplasm. It catalyses the reaction alpha-D-glucose 6-phosphate = beta-D-fructose 6-phosphate. Its pathway is carbohydrate biosynthesis; gluconeogenesis. It participates in carbohydrate degradation; glycolysis; D-glyceraldehyde 3-phosphate and glycerone phosphate from D-glucose: step 2/4. In terms of biological role, catalyzes the reversible isomerization of glucose-6-phosphate to fructose-6-phosphate. The sequence is that of Glucose-6-phosphate isomerase from Mycolicibacterium vanbaalenii (strain DSM 7251 / JCM 13017 / BCRC 16820 / KCTC 9966 / NRRL B-24157 / PYR-1) (Mycobacterium vanbaalenii).